A 219-amino-acid chain; its full sequence is Exosomal polycystin-1-interacting protein (219 aa).

An N-terminal signal peptide occupies residues 1–19 (MAPPSRHCLLLISTLGVFA). Residues asparagine 29, asparagine 42, asparagine 95, asparagine 188, and asparagine 210 are each glycosylated (N-linked (GlcNAc...) asparagine).

Belongs to the EPCIP family. In terms of assembly, homooligomer. Interacts with PKD1 (via the PKD repeats in the N-terminal extracellular region); the interaction is not dependent on N-glycosylation of either protein. Post-translationally, N-glycosylated. As to expression, detected in the kidney and in the endothelium of large blood vessels (at protein level).

Its subcellular location is the vesicle. The protein resides in the secreted. The protein localises to the extracellular exosome. Likely to be involved with PKD1 in the detection, sequestration and exocytosis of senescent mitochondria. In Homo sapiens (Human), this protein is Exosomal polycystin-1-interacting protein.